Reading from the N-terminus, the 83-residue chain is Kappa-actitoxin-Aer3a (83 aa).

The signal sequence occupies residues 1 to 22 (MKGQMIICLVLIALCMSVVVMA). Positions 23 to 49 (QNLRAEELEKANPKDERVRSFERNQKR) are excised as a propeptide. One can recognise a ShKT domain in the interval 51–83 (CKDYLPKSECTQFRCRTSMKYKYTNCKKTCGTC). 3 disulfides stabilise this stretch: cysteine 51-cysteine 83, cysteine 60-cysteine 76, and cysteine 65-cysteine 80.

Belongs to the sea anemone type 1 potassium channel toxin family. Type 1a subfamily.

It is found in the secreted. The protein localises to the nematocyst. Its function is as follows. Specifically, dose-dependently and potently blocks the voltage-gated potassium channel Kv1.1/KCNA1 (Ki=1.6 pM). Moderately blocks potassium channel heterotetramers formed by 3 subunits of Kv1.1/KCNA1 and 1 subunit of Kv1.2/KCNA2 (Ki=56 nM) and weakly blocks those formed by 2 subunits of Kv1.1/KCNA1 and 2 subunits of Kv1.2/KCNA2 (Ki=14 nM). The polypeptide is Kappa-actitoxin-Aer3a (Anemonia erythraea (Sea anemone)).